The sequence spans 629 residues: Chaperone protein DnaK (629 aa).

Position 195 is a phosphothreonine; by autocatalysis (Thr195). 2 disordered regions span residues 514 to 533 (EAEQNAEADRKRRERVEKRN) and 543 to 629 (LGQL…KPAE). Basic and acidic residues predominate over residues 555–590 (DAKDRLKAAADEAEEAVRSDDDSRIERAQKQLEEAM). Over residues 595-614 (TAAQSGSQNQAGQGAQTQTG) the composition is skewed to low complexity. A compositionally biased stretch (basic and acidic residues) spans 615 to 629 (RQEDDVIDADFKPAE).

The protein belongs to the heat shock protein 70 family.

Acts as a chaperone. The polypeptide is Chaperone protein DnaK (Deinococcus geothermalis (strain DSM 11300 / CIP 105573 / AG-3a)).